Reading from the N-terminus, the 1235-residue chain is DNA polymerase (1235 aa).

Residues 773–887 (LLGYYISSGD…LILLLNSIGV (115 aa)) enclose the DOD-type homing endonuclease domain.

The protein belongs to the DNA polymerase type-B family. This protein undergoes a protein self splicing that involves a post-translational excision of the intervening region (intein) followed by peptide ligation.

It carries out the reaction DNA(n) + a 2'-deoxyribonucleoside 5'-triphosphate = DNA(n+1) + diphosphate. The polypeptide is DNA polymerase (pol) (Pyrococcus horikoshii (strain ATCC 700860 / DSM 12428 / JCM 9974 / NBRC 100139 / OT-3)).